The following is a 586-amino-acid chain: Phosphomethylpyrimidine synthase (586 aa).

A disordered region spans residues 1-59 (MKQSVSAEQIELKSSLPGSKKVYVDGPREGMKVPMREIEQSDTNGVPNPPIRVYDTSGP). Positions 22 to 39 (VYVDGPREGMKVPMREIE) are enriched in basic and acidic residues. Substrate is bound by residues asparagine 193, methionine 222, tyrosine 251, histidine 287, 307-309 (SRG), 348-351 (DGLR), and glutamate 387. Histidine 391 lines the Zn(2+) pocket. Tyrosine 414 provides a ligand contact to substrate. Histidine 455 is a Zn(2+) binding site. 3 residues coordinate [4Fe-4S] cluster: cysteine 535, cysteine 538, and cysteine 543.

This sequence belongs to the ThiC family. Requires [4Fe-4S] cluster as cofactor.

The enzyme catalyses 5-amino-1-(5-phospho-beta-D-ribosyl)imidazole + S-adenosyl-L-methionine = 4-amino-2-methyl-5-(phosphooxymethyl)pyrimidine + CO + 5'-deoxyadenosine + formate + L-methionine + 3 H(+). Its pathway is cofactor biosynthesis; thiamine diphosphate biosynthesis. In terms of biological role, catalyzes the synthesis of the hydroxymethylpyrimidine phosphate (HMP-P) moiety of thiamine from aminoimidazole ribotide (AIR) in a radical S-adenosyl-L-methionine (SAM)-dependent reaction. This Bacillus cereus (strain ZK / E33L) protein is Phosphomethylpyrimidine synthase.